Consider the following 513-residue polypeptide: Pantetheinase (513 aa).

The signal sequence occupies residues 1 to 22; the sequence is MITSPLLAYVAILFFCVLKASS. The CN hydrolase domain maps to 40–307; that stretch reads APLTPVSHEE…GKLLLSQLDS (268 aa). Glu-80 serves as the catalytic Proton acceptor. Asn-147 carries an N-linked (GlcNAc...) asparagine glycan. The Proton donor role is filled by Lys-179. Cys-212 acts as the Nucleophile in catalysis. Asn-315 and Asn-353 each carry an N-linked (GlcNAc...) asparagine glycan. A lipid anchor (GPI-anchor amidated glycine) is attached at Gly-487. Residues 488 to 513 constitute a propeptide, removed in mature form; it reads ASADLVAQGLRVMLGVIITIMYSLSW.

Belongs to the carbon-nitrogen hydrolase superfamily. BTD/VNN family. Monomer. Detected in kidney (at protein level).

The protein resides in the cell membrane. It catalyses the reaction (R)-pantetheine + H2O = cysteamine + (R)-pantothenate. Amidohydrolase that hydrolyzes specifically one of the carboamide linkages in D-pantetheine thus recycling pantothenic acid (vitamin B5) and releasing cysteamine. This Sus scrofa (Pig) protein is Pantetheinase (VNN1).